Reading from the N-terminus, the 214-residue chain is Octanoyltransferase (214 aa).

In terms of domain architecture, BPL/LPL catalytic spans Glu32–Pro207. Residues Arg71 to His78, Ser138 to Gly140, and Gly151 to Ala153 contribute to the substrate site. Catalysis depends on Cys169, which acts as the Acyl-thioester intermediate.

This sequence belongs to the LipB family.

The protein localises to the cytoplasm. It carries out the reaction octanoyl-[ACP] + L-lysyl-[protein] = N(6)-octanoyl-L-lysyl-[protein] + holo-[ACP] + H(+). Its pathway is protein modification; protein lipoylation via endogenous pathway; protein N(6)-(lipoyl)lysine from octanoyl-[acyl-carrier-protein]: step 1/2. Functionally, catalyzes the transfer of endogenously produced octanoic acid from octanoyl-acyl-carrier-protein onto the lipoyl domains of lipoate-dependent enzymes. Lipoyl-ACP can also act as a substrate although octanoyl-ACP is likely to be the physiological substrate. This is Octanoyltransferase from Klebsiella pneumoniae subsp. pneumoniae (strain ATCC 700721 / MGH 78578).